Consider the following 81-residue polypeptide: Exodeoxyribonuclease 7 small subunit (81 aa).

The protein belongs to the XseB family. As to quaternary structure, heterooligomer composed of large and small subunits.

The protein resides in the cytoplasm. It catalyses the reaction Exonucleolytic cleavage in either 5'- to 3'- or 3'- to 5'-direction to yield nucleoside 5'-phosphates.. Functionally, bidirectionally degrades single-stranded DNA into large acid-insoluble oligonucleotides, which are then degraded further into small acid-soluble oligonucleotides. This is Exodeoxyribonuclease 7 small subunit from Paramagnetospirillum magneticum (strain ATCC 700264 / AMB-1) (Magnetospirillum magneticum).